Here is a 1851-residue protein sequence, read N- to C-terminus: Protein lap4 (1851 aa).

LRR repeat units follow at residues 38–59 (TLEE…FFRL), 61–82 (RLRK…IQNF), 84–105 (NLVE…IKHL), 107–128 (SLQV…FSQL), 130–152 (NLTV…GSLT), 153–174 (QLES…ISQL), 176–197 (KLKR…LGYL), 199–220 (GLHE…LGLL), 222–243 (KLTY…ISGL), 245–267 (SLTD…AKLS), 268–289 (RLTI…LGNC), 291–312 (NMQE…IGQM), 314–335 (KLNN…IGQC), 337–358 (NLGV…LGNC), 360–382 (VLHV…VNLQ), and 383–403 (LKAV…QPDT). 3 disordered regions span residues 427-474 (PARD…KDLK), 584-641 (VGGS…VQHL), and 656-719 (SQER…PDNL). Residues Ser433 and Ser435 each carry the phosphoserine modification. Basic and acidic residues predominate over residues 438–461 (FEEREPSRTVVKFSEEATQEKETP). The stretch at 471–492 (KDLKAKAQKLKVERSRNEEHAN) forms a coiled coil. Positions 589–601 (EVQDDDEQEDEFE) are enriched in acidic residues. The segment covering 620–639 (RPPKLHRRDTPHHLKNKRVQ) has biased composition (basic residues). Positions 656 to 672 (SQERNDTTPQHSLSGKV) are enriched in polar residues. Residues 676-686 (IEEEEQLEVEQ) are compositionally biased toward acidic residues. Residues 677 to 693 (EEEEQLEVEQEQQQQQQ) are a coiled coil. A phosphoserine mark is found at Ser700, Ser702, and Ser705. Residues 731–818 (EIHIERTAAG…VLVLVVQREV (88 aa)) form the PDZ 1 domain. A phosphoserine mark is found at Ser834 and Ser837. The PDZ 2 domain maps to 929 to 1019 (HTTLIRDQIG…FVRLVLQREY (91 aa)). 2 positions are modified to phosphoserine: Ser1031 and Ser1041. The interval 1067 to 1150 (LATTTPTPKP…EAQPSSLRPL (84 aa)) is disordered. Polar residues-rich tracts occupy residues 1080 to 1097 (ASIS…TNGF) and 1132 to 1149 (GSTT…SLRP). PDZ domains are found at residues 1239 to 1329 (EVVL…QHDP) and 1336 to 1428 (EVLL…CKGY). Polar residues predominate over residues 1448-1467 (NSSASCSGGSRQGSRASETG). Residues 1448–1485 (NSSASCSGGSRQGSRASETGSELSQSQSVSSLDHEEDE) form a disordered region. Over residues 1468-1478 (SELSQSQSVSS) the composition is skewed to low complexity. A phosphoserine mark is found at Ser1475, Ser1477, and Ser1478. Thr1599 bears the Phosphothreonine mark. The segment covering 1647 to 1669 (AESANSAGAPSPAVPASTPGSAP) has biased composition (low complexity). Disordered stretches follow at residues 1647-1751 (AESA…KVFS) and 1772-1851 (LRRD…VFRS). Over residues 1725–1751 (VSDKKRFFESAMEDQHKPTQKTDKVFS) the composition is skewed to basic and acidic residues. Residues 1753-1790 (LSKDEVEKLRQEEERKIATLRRDKNSRLLDAANDNIDK) are a coiled coil. Over residues 1807–1816 (DDNDDSDQEE) the composition is skewed to acidic residues. A compositionally biased stretch (basic and acidic residues) spans 1831–1851 (HFDDAEDMRNPLDEIEAVFRS).

It belongs to the LAP (LRR and PDZ) protein family. During germ band extension, expression of isoform A occurs predominantly in neuroblasts derived from the neuro-ectoderm and later is restricted to CNS neurons and pole cells. Isoform C is strongly expressed in PNS and a subset of CNS neurons. In the adult, expressed in third antennal segment and maxillary palps, major olfactory organs and in Johnstons organ in the second antennal segment. Expression is also observed in cortical regions of the brain. Isoforms expressed in epithelia are coexpressed with dlg1 throughout development.

It is found in the cytoplasm. The protein localises to the apicolateral cell membrane. The protein resides in the cell junction. It localises to the septate junction. Required for polarization of the embryonic, imaginal disk and follicular epithelia. Specifically restricts apical membrane determinants to the apical cell surface; acts to exclude crb from the basolateral domain and define adherens junction position. Regulates cellular growth and differentiation; acts as a tumor suppressor. Essential for odor guided behavior. The polypeptide is Protein lap4 (Drosophila melanogaster (Fruit fly)).